Consider the following 339-residue polypeptide: Deoxyhypusine hydroxylase (339 aa).

HEAT-like PBS-type repeat units follow at residues 71–97 (LKHE…VVKN) and 104–130 (CRHE…LRDD). Residues H73, E74, H106, and E107 each contribute to the Fe cation site. Residues 159 to 183 (EKLKPSDFTSIDPAPPLPMASSQPS) are disordered. 3 HEAT-like PBS-type repeats span residues 200-233 (QRYR…GLKD), 238-264 (FRHE…TLSD), and 271-298 (VRHE…FLND). 4 residues coordinate Fe cation: H240, E241, H273, and E274.

The protein belongs to the deoxyhypusine hydroxylase family. It depends on Fe(2+) as a cofactor.

The protein resides in the cytoplasm. It is found in the nucleus. The enzyme catalyses [eIF5A protein]-deoxyhypusine + AH2 + O2 = [eIF5A protein]-hypusine + A + H2O. The protein operates within protein modification; eIF5A hypusination. Catalyzes the hydroxylation of the N(6)-(4-aminobutyl)-L-lysine intermediate to form hypusine, an essential post-translational modification only found in mature eIF-5A factor. The protein is Deoxyhypusine hydroxylase (lia1) of Aspergillus oryzae (strain ATCC 42149 / RIB 40) (Yellow koji mold).